A 324-amino-acid polypeptide reads, in one-letter code: MYG1 protein C694.04c (324 aa).

It belongs to the MYG1 family.

In Schizosaccharomyces pombe (strain 972 / ATCC 24843) (Fission yeast), this protein is MYG1 protein C694.04c.